A 131-amino-acid chain; its full sequence is Large-conductance mechanosensitive channel (131 aa).

The next 3 helical transmembrane spans lie at 14–34 (IMDLAIGVVIGGAFGKIVTSL), 38–58 (IIMPLVGLLLGGLDFSGLAVT), and 67–87 (GSFIQTIVNFFIISFSIFIVI).

Belongs to the MscL family. Homopentamer.

The protein localises to the cell membrane. Its function is as follows. Channel that opens in response to stretch forces in the membrane lipid bilayer. May participate in the regulation of osmotic pressure changes within the cell. The chain is Large-conductance mechanosensitive channel from Bacillus velezensis (strain DSM 23117 / BGSC 10A6 / LMG 26770 / FZB42) (Bacillus amyloliquefaciens subsp. plantarum).